The sequence spans 213 residues: Embryo-specific protein ATS3 (213 aa).

Residues 1–21 form the signal peptide; sequence MTFPSLSVSFLFFAFIFVTHA. The PLAT domain occupies 34 to 148; sequence CPYTVVVMTS…LNTWYGHNNC (115 aa). The tract at residues 147–188 is disordered; it reads NCNTTGRPSSPDLPPPHFPPEFPPETPTTPPPPPPRPSAASR. An N-linked (GlcNAc...) asparagine glycan is attached at Asn149. Positions 157–183 are enriched in pro residues; sequence PDLPPPHFPPEFPPETPTTPPPPPPRP.

As to expression, expressed in seeds. Expression is restricted to the developing embryo.

It is found in the secreted. May play a role during embryo development. The chain is Embryo-specific protein ATS3 from Arabidopsis thaliana (Mouse-ear cress).